We begin with the raw amino-acid sequence, 206 residues long: 2-oxoglutarate-dependent dioxygenase iboH (206 aa).

In terms of domain architecture, Fe2OG dioxygenase spans proline 51 to proline 157. Histidine 75, aspartate 77, and histidine 134 together coordinate Fe cation. Arginine 148 serves as a coordination point for 2-oxoglutarate.

Belongs to the iron/ascorbate-dependent oxidoreductase family. Fe(2+) serves as cofactor.

It catalyses the reaction L-glutamate + 2-oxoglutarate + O2 = (3R)-3-hydroxy-L-glutamate + succinate + CO2. Its pathway is secondary metabolite biosynthesis. Its function is as follows. 2-oxoglutarate-dependent dioxygenase; part of the gene cluster that mediates the biosynthesis of the psychoactive metabolites ibotenic acid and muscimol. The first committed step is glutamate hydroxylation by the 2-oxoglutarate-dependent dioxygenase iboH, and the last step is decarboxylation of ibotenic acid to muscimol by the decarboxylase iboD. The order of the intermediate reactions is somewhat ambiguous. IboA likely activates the carboxylic acid at position 5 to introduce an amide bond, and the flavin monooxygenase iboF generates the N-O bond. There are several options for the latter step. One option is that iboF directly hydroxylates the amide nitrogen formed by iboA to produce a hydroxamic acid species. Another option is that iboF hydroxylates an external N-containing compound, whose resulting N-O bond is subsequently introduced into the hydroxyglutamate scaffold. The paralogous PLP-dependent cystathionine gamma-synthase-like enzymes iboG1 and iboG2 are likely involved in substitution of the OH group at position 3 by the O-N moiety. The first cyclic intermediate is most probably tricholomic acid which is likely desaturated to ibotenic acid by the cytochrome P450 monooxygenase iboC. In Amanita muscaria (strain Koide BX008), this protein is 2-oxoglutarate-dependent dioxygenase iboH.